The chain runs to 271 residues: Phosphoglycerate mutase-like protein (271 aa).

Histidine 22 functions as the Tele-phosphohistidine intermediate in the catalytic mechanism. Glutamate 134 (proton donor/acceptor) is an active-site residue. The segment at 252 to 271 (SAETTNYPGKVPEGLDNPSG) is disordered.

Belongs to the phosphoglycerate mutase family. Expressed in the shoot apical meristem and meristematic zone of the root tips.

In terms of biological role, may play a role in carbohydrates metabolism. This is Phosphoglycerate mutase-like protein from Arabidopsis thaliana (Mouse-ear cress).